The sequence spans 50 residues: Large ribosomal subunit protein bL33B (50 aa).

The protein belongs to the bacterial ribosomal protein bL33 family.

This Streptococcus pyogenes serotype M1 protein is Large ribosomal subunit protein bL33B.